A 174-amino-acid chain; its full sequence is Large ribosomal subunit protein uL10 (174 aa).

It belongs to the universal ribosomal protein uL10 family. Part of the ribosomal stalk of the 50S ribosomal subunit. The N-terminus interacts with L11 and the large rRNA to form the base of the stalk. The C-terminus forms an elongated spine to which L12 dimers bind in a sequential fashion forming a multimeric L10(L12)X complex.

In terms of biological role, forms part of the ribosomal stalk, playing a central role in the interaction of the ribosome with GTP-bound translation factors. The sequence is that of Large ribosomal subunit protein uL10 from Pelobacter propionicus (strain DSM 2379 / NBRC 103807 / OttBd1).